The following is a 452-amino-acid chain: Phosphoglucosamine mutase (452 aa).

Catalysis depends on S108, which acts as the Phosphoserine intermediate. Mg(2+)-binding residues include S108, D247, D249, and D251. S108 carries the post-translational modification Phosphoserine.

It belongs to the phosphohexose mutase family. Mg(2+) is required as a cofactor. Activated by phosphorylation.

It carries out the reaction alpha-D-glucosamine 1-phosphate = D-glucosamine 6-phosphate. Functionally, catalyzes the conversion of glucosamine-6-phosphate to glucosamine-1-phosphate. This is Phosphoglucosamine mutase from Paraburkholderia phytofirmans (strain DSM 17436 / LMG 22146 / PsJN) (Burkholderia phytofirmans).